Here is a 37-residue protein sequence, read N- to C-terminus: Large ribosomal subunit protein bL36c (37 aa).

This sequence belongs to the bacterial ribosomal protein bL36 family.

The protein localises to the plastid. Its subcellular location is the chloroplast. This is Large ribosomal subunit protein bL36c from Adiantum capillus-veneris (Maidenhair fern).